The primary structure comprises 704 residues: Elongation factor G (704 aa).

The region spanning 10-290 (NKVRNIGIMA…AVIDYLPSPL (281 aa)) is the tr-type G domain. GTP-binding positions include 19–26 (AHIDAGKT), 83–87 (DTPGH), and 137–140 (NKMD).

It belongs to the TRAFAC class translation factor GTPase superfamily. Classic translation factor GTPase family. EF-G/EF-2 subfamily.

Its subcellular location is the cytoplasm. Its function is as follows. Catalyzes the GTP-dependent ribosomal translocation step during translation elongation. During this step, the ribosome changes from the pre-translocational (PRE) to the post-translocational (POST) state as the newly formed A-site-bound peptidyl-tRNA and P-site-bound deacylated tRNA move to the P and E sites, respectively. Catalyzes the coordinated movement of the two tRNA molecules, the mRNA and conformational changes in the ribosome. The sequence is that of Elongation factor G from Clavibacter sepedonicus (Clavibacter michiganensis subsp. sepedonicus).